Consider the following 216-residue polypeptide: Ras-related protein RABE1a (216 aa).

22 to 29 is a GTP binding site; the sequence is GDSGVGKS. The Effector region signature appears at 44–52; the sequence is FITTIGIDF. GTP contacts are provided by residues 70–74, 128–131, and 159–160; these read DTAGQ, NKAD, and SA. The disordered stretch occupies residues 185-216; sequence DARAEPQTIKINQSDQGAGTSQATQKSACCGT. Polar residues predominate over residues 193 to 216; it reads IKINQSDQGAGTSQATQKSACCGT. Residues C213 and C214 are each lipidated (S-geranylgeranyl cysteine).

It belongs to the small GTPase superfamily. Rab family. Interacts with PI5K2.

It localises to the golgi apparatus membrane. It is found in the cell membrane. Its function is as follows. Involved in membrane trafficking from the Golgi to the plasma membrane. The polypeptide is Ras-related protein RABE1a (RABE1A) (Arabidopsis thaliana (Mouse-ear cress)).